The chain runs to 927 residues: Transmembrane protein 132 homolog (927 aa).

Positions 1–18 (MLKKLWICISCIVTTALS) are cleaved as a signal peptide. A helical membrane pass occupies residues 749-769 (FHIFVLTIIGLIILFLFISFV). Residues 789–842 (LSSSSGSNSRQEETNEWVWLSQPQPPSSTISSGYSGNKSTAERQSSNGDDPSRT) form a disordered region. Over residues 817-842 (TISSGYSGNKSTAERQSSNGDDPSRT) the composition is skewed to polar residues.

It belongs to the TMEM132 family. As to quaternary structure, interacts with gex-3. In terms of tissue distribution, specifically expressed in neurons.

The protein resides in the membrane. Its function is as follows. Regulates neuronal morphology via inhibition of the WAVE regulatory complex (WCR), a complex that controls F-actin cytoskeletal dynamics. The sequence is that of Transmembrane protein 132 homolog from Caenorhabditis elegans.